Consider the following 64-residue polypeptide: Fatty acid synthase (64 aa).

One can recognise a Carrier domain in the interval 1–64; sequence AEGEGQRDLL…VLSMREVRQL (64 aa). Serine 38 is subject to O-(pantetheine 4'-phosphoryl)serine; alternate. Serine 38 carries the phosphoserine; alternate modification.

In terms of assembly, homodimer which is arranged in a head to tail fashion. Interacts with CEACAM1; this interaction is insulin and phosphorylation-dependent; reduces fatty-acid synthase activity.

The protein resides in the cytoplasm. It is found in the melanosome. The catalysed reaction is acetyl-CoA + n malonyl-CoA + 2n NADPH + 2n H(+) = a long-chain fatty acid + (n+1) CoA + n CO2 + 2n NADP(+).. In terms of biological role, fatty acid synthetase catalyzes the formation of long-chain fatty acids from acetyl-CoA, malonyl-CoA and NADPH. This multifunctional protein has 7 catalytic activities as an acyl carrier protein. This Oryctolagus cuniculus (Rabbit) protein is Fatty acid synthase (FASN).